A 360-amino-acid chain; its full sequence is D-alanine--D-alanine ligase (360 aa).

Residues 146 to 352 (KICAEHAGLH…FSQLIDRLLQ (207 aa)) enclose the ATP-grasp domain. 179 to 234 (LEEFTLPFFVKPASQGSSIGITKVHRPEELAAALEKAFMVDTKVLIEKTIEGREIE) serves as a coordination point for ATP. Mg(2+)-binding residues include aspartate 305, glutamate 319, and asparagine 321.

The protein belongs to the D-alanine--D-alanine ligase family. Mg(2+) is required as a cofactor. It depends on Mn(2+) as a cofactor.

The protein localises to the cytoplasm. The catalysed reaction is 2 D-alanine + ATP = D-alanyl-D-alanine + ADP + phosphate + H(+). Its pathway is cell wall biogenesis; peptidoglycan biosynthesis. In terms of biological role, cell wall formation. This is D-alanine--D-alanine ligase from Prosthecochloris aestuarii (strain DSM 271 / SK 413).